A 309-amino-acid polypeptide reads, in one-letter code: F-box/LRR-repeat protein At3g48880 (309 aa).

The region spanning 10–57 is the F-box domain; the sequence is LRRWEELDTDILVRIFQKFSVFELTSGLAHVCRGWRAACCDPILWKTV. LRR repeat units follow at residues 77-107, 108-133, 159-184, and 208-233; these read VERR…IFHF, NLFL…VLPA, SIAN…KIMG, and CSAI…NISH.

This chain is F-box/LRR-repeat protein At3g48880, found in Arabidopsis thaliana (Mouse-ear cress).